A 1025-amino-acid chain; its full sequence is Multidrug resistance protein MdtC (1025 aa).

The next 12 membrane-spanning stretches (helical) occupy residues 3 to 23 (FFAL…AITL), 333 to 353 (EVEQ…FLFL), 360 to 380 (IIPA…MYLC), 387 to 407 (LSLM…IVVL), 431 to 451 (VGFT…PLLL), 463 to 483 (FAVT…TLTP), 528 to 548 (LVGV…ISIP), 853 to 873 (VILI…LYES), 875 to 895 (VHPL…LLAL), 897 to 917 (LFNA…IGIV), 953 to 973 (PIMM…LSGG), and 984 to 1004 (ITIV…TPVV).

This sequence belongs to the resistance-nodulation-cell division (RND) (TC 2.A.6) family. MdtC subfamily. Part of a tripartite efflux system composed of MdtA, MdtB and MdtC. MdtC forms a heteromultimer with MdtB.

It localises to the cell inner membrane. Functionally, the MdtABC tripartite complex confers resistance against novobiocin and deoxycholate. This Escherichia coli O7:K1 (strain IAI39 / ExPEC) protein is Multidrug resistance protein MdtC.